A 113-amino-acid chain; its full sequence is U11-theraphotoxin-Hhn1f (113 aa).

The signal sequence occupies residues 1–21 (MNTVRVTFLLVFVLAVSLGQA). A propeptide spanning residues 22-74 (DKDENRMEMQEKTEQGKSYLDFAENLLLQKLEELEAKLLEEDSKESRNSRQKR) is cleaved from the precursor. The tract at residues 61–82 (EEDSKESRNSRQKRCIGEGVPC) is disordered. Disulfide bonds link C75/C90, C82/C95, and C89/C110.

It belongs to the neurotoxin 14 (magi-1) family. 01 (HNTX-16) subfamily. As to expression, expressed by the venom gland.

It is found in the secreted. Functionally, probable ion channel inhibitor. The protein is U11-theraphotoxin-Hhn1f of Cyriopagopus hainanus (Chinese bird spider).